The sequence spans 509 residues: Ribonuclease E/G-like protein (509 aa).

In terms of domain architecture, S1 motif spans 35-117; the sequence is SDIYLGCVDK…LTANITLSGR (83 aa). Residues Asp-296 and Asp-339 each contribute to the Mg(2+) site.

The protein belongs to the RNase E/G family. Mg(2+) is required as a cofactor.

It is found in the plastid. The protein resides in the chloroplast stroma. Functionally, involved in intercistronic processing of primary transcripts from chloroplast operons. The endonucleolytic activity of the enzyme depends on the number of phosphates at the 5' end, is inhibited by structured RNA, and preferentially cleaves A/U-rich sequences. In Pyropia yezoensis (Susabi-nori), this protein is Ribonuclease E/G-like protein (rne).